Reading from the N-terminus, the 1075-residue chain is Protein EXPORTIN 1A (1075 aa).

The 67-residue stretch at 37–103 (ADQILRDLQA…KNYISEVIVQ (67 aa)) folds into the Importin N-terminal domain. HEAT repeat units follow at residues 91–130 (DGMK…QIVK), 135–171 (AKWT…EVFD), 232–267 (IFES…LNFG), 336–373 (SLLL…ELFD), 388–425 (MGLQ…LMIN), 474–513 (DTEK…SMAE), 563–600 (KFLK…KCKR), 612–649 (PFVS…AESD), 682–719 (LKDQ…IFLD), 756–793 (RETL…DYAR), 798–835 (ARES…CTLE), and 894–934 (ETGL…VLTD).

Belongs to the exportin family. As to quaternary structure, interacts with RAN1. In terms of tissue distribution, expressed ubiquitously, with higher levels in stems, inflorescences and roots. Present in mature pollen grains, unpollinated pistils, and 2-week-old seedlings.

The protein resides in the nucleus. Its subcellular location is the nuclear pore complex. The protein localises to the nucleus membrane. Its function is as follows. Receptor for the leucine-rich nuclear export signal (NES). Binds cooperatively to the NES on its target protein and to the small GTPase Ran in its active GTP-bound form. Required for the maternal-to-embryonic transition and during gametophyte development. Involved in heat-induced oxidative stress basal resistance. In Arabidopsis thaliana (Mouse-ear cress), this protein is Protein EXPORTIN 1A.